The following is a 921-amino-acid chain: Glutamate receptor 3.7 (921 aa).

An N-terminal signal peptide occupies residues 1-25; it reads MGLGIDPSVAITALIVVILVVPMDC. The Extracellular segment spans residues 26-580; the sequence is QRPQLVNIGA…WIFLRPFTSR (555 aa). Residues Asn-214, Asn-300, Asn-330, Asn-369, Asn-396, Asn-478, and Asn-568 are each glycosylated (N-linked (GlcNAc...) asparagine). A helical transmembrane segment spans residues 581-601; sequence LWCVVLVSFLVIAVVIWILEH. At 602–608 the chain is on the cytoplasmic side; sequence RINEDFR. Residues 609-629 form a helical membrane-spanning segment; the sequence is GPPRRQLSTMLLFSFSTLFKR. The Cytoplasmic portion of the chain corresponds to 630–640; it reads NQEDTISNLAR. Residues 641–661 form a helical membrane-spanning segment; that stretch reads LVMIVWLFLLMVLTASYTANL. Topologically, residues 662-822 are extracellular; sequence TSILTVQQLP…PEPNQLHLKS (161 aa). The helical transmembrane segment at 823-843 threads the bilayer; sequence FKGLYLVCIAITVSAFLVFVL. The Cytoplasmic portion of the chain corresponds to 844-921; it reads RMIRQFVRYR…VQADTEVPRN (78 aa). Residues 896–921 are disordered; sequence FRRSDDSNNNPSHVGEVQADTEVPRN.

Belongs to the glutamate-gated ion channel (TC 1.A.10.1) family. May form heteromers. Expressed predominantly in leaves and siliques. Also detected in roots.

It is found in the membrane. Functionally, glutamate-gated receptor that probably acts as a non-selective cation channel. May be involved in light-signal transduction and calcium homeostasis via the regulation of calcium influx into cells. The polypeptide is Glutamate receptor 3.7 (GLR3.7) (Arabidopsis thaliana (Mouse-ear cress)).